A 343-amino-acid chain; its full sequence is Apolipoprotein L6 (343 aa).

Over residues 1–10 (MDNQAERESE) the composition is skewed to basic and acidic residues. The tract at residues 1–24 (MDNQAERESEAGVGLQRDEDDAPL) is disordered.

It belongs to the apolipoprotein L family. As to expression, widely expressed; highly expressed in the uterus, fetal brain and spinal cord, also detected in heart, liver, lung, colon, spleen, thymus, prostate, placenta, adrenal gland, salivary and mammary gland.

It localises to the cytoplasm. May affect the movement of lipids in the cytoplasm or allow the binding of lipids to organelles. This chain is Apolipoprotein L6 (APOL6), found in Homo sapiens (Human).